The primary structure comprises 874 residues: Ribosome biogenesis protein ERB1 (874 aa).

The disordered stretch occupies residues 1 to 148 (MAKKEVSASK…DAFAAADAAT (148 aa)). Residues 27–41 (QAVEKEEAEKEKEEG) are compositionally biased toward basic and acidic residues. Over residues 55 to 77 (PESDSDDEGAAAAEEEEEEEEQQ) the composition is skewed to acidic residues. Over residues 78-89 (QDVKELDLDKGE) the composition is skewed to basic and acidic residues. Acidic residues-rich tracts occupy residues 95–104 (SDAEDFDSEE) and 128–139 (PKEDGDEQDEQD). Residues 312-429 (RFVPSKHEAK…LRLVPGYQDS (118 aa)) are required for interaction with NOP7. A required for interaction with YTM1 region spans residues 429–465 (SVRERFERSLDLYLAPRLRKNKLNIDPESLIPELPSP). WD repeat units follow at residues 481–520 (GHTGKIRTLSIDPQGLWLATGSDDGSVRIWEVLTGRQVFK) and 529–569 (NGED…FEIE). The segment covering 593-602 (KVKGEDTKGD) has biased composition (basic and acidic residues). Residues 593 to 640 (KVKGEDTKGDLDDDEEEEEEEEDDDDDEGQGKVKAHNSTAPAKKDVAK) are disordered. Acidic residues predominate over residues 603 to 620 (LDDDEEEEEEEEDDDDDE). 5 WD repeats span residues 658-700 (QCRR…SQSP), 703-741 (KSKGVIMDAKFHPFKPQLFVASQRQIKIYDLAQQTLLKK), 744-783 (PGVRLLSTIDLHPRGDNLLAASYDKRVLWHDLDLAATPYK), 787-827 (YHEK…DLMT), and 843-874 (INQIGVLDIVWHPKEAWLFSAGADGTARLWTT).

The protein belongs to the WD repeat BOP1/ERB1 family. Component of the NOP7 complex, composed of ERB1, NOP7 and YTM1. The complex is held together by ERB1, which interacts with NOP7 via its N-terminal domain and with YTM1 via a high-affinity interaction between the seven-bladed beta-propeller domains of the 2 proteins. The NOP7 complex associates with the 66S pre-ribosome.

The protein localises to the nucleus. The protein resides in the nucleolus. Its subcellular location is the nucleoplasm. In terms of biological role, component of the NOP7 complex, which is required for maturation of the 25S and 5.8S ribosomal RNAs and formation of the 60S ribosome. In Lodderomyces elongisporus (strain ATCC 11503 / CBS 2605 / JCM 1781 / NBRC 1676 / NRRL YB-4239) (Yeast), this protein is Ribosome biogenesis protein ERB1.